The primary structure comprises 647 residues: Acetyl-coenzyme A synthetase (647 aa).

CoA-binding positions include 190-193, threonine 310, and asparagine 334; that span reads RGGK. ATP contacts are provided by residues 386–388, 410–415, aspartate 499, and arginine 514; these read GEP and DTWWQT. Serine 522 is a binding site for CoA. Arginine 525 contacts ATP. 3 residues coordinate Mg(2+): valine 536, histidine 538, and valine 541. Position 583 (arginine 583) interacts with CoA. An N6-acetyllysine modification is found at lysine 608.

Belongs to the ATP-dependent AMP-binding enzyme family. It depends on Mg(2+) as a cofactor. Acetylated. Deacetylation by the SIR2-homolog deacetylase activates the enzyme.

The enzyme catalyses acetate + ATP + CoA = acetyl-CoA + AMP + diphosphate. Functionally, catalyzes the conversion of acetate into acetyl-CoA (AcCoA), an essential intermediate at the junction of anabolic and catabolic pathways. AcsA undergoes a two-step reaction. In the first half reaction, AcsA combines acetate with ATP to form acetyl-adenylate (AcAMP) intermediate. In the second half reaction, it can then transfer the acetyl group from AcAMP to the sulfhydryl group of CoA, forming the product AcCoA. This Xanthomonas axonopodis pv. citri (strain 306) protein is Acetyl-coenzyme A synthetase.